Reading from the N-terminus, the 242-residue chain is Pyridoxine 5'-phosphate synthase (242 aa).

3-amino-2-oxopropyl phosphate is bound at residue asparagine 7. Position 9-10 (9-10 (DH)) interacts with 1-deoxy-D-xylulose 5-phosphate. Arginine 18 is a binding site for 3-amino-2-oxopropyl phosphate. The active-site Proton acceptor is histidine 44. Residues arginine 46 and histidine 51 each contribute to the 1-deoxy-D-xylulose 5-phosphate site. The active-site Proton acceptor is glutamate 71. Threonine 101 is a 1-deoxy-D-xylulose 5-phosphate binding site. Histidine 192 serves as the catalytic Proton donor. 3-amino-2-oxopropyl phosphate-binding positions include glycine 193 and 214–215 (GH).

Belongs to the PNP synthase family. In terms of assembly, homooctamer; tetramer of dimers.

Its subcellular location is the cytoplasm. It carries out the reaction 3-amino-2-oxopropyl phosphate + 1-deoxy-D-xylulose 5-phosphate = pyridoxine 5'-phosphate + phosphate + 2 H2O + H(+). It functions in the pathway cofactor biosynthesis; pyridoxine 5'-phosphate biosynthesis; pyridoxine 5'-phosphate from D-erythrose 4-phosphate: step 5/5. In terms of biological role, catalyzes the complicated ring closure reaction between the two acyclic compounds 1-deoxy-D-xylulose-5-phosphate (DXP) and 3-amino-2-oxopropyl phosphate (1-amino-acetone-3-phosphate or AAP) to form pyridoxine 5'-phosphate (PNP) and inorganic phosphate. This is Pyridoxine 5'-phosphate synthase from Synechocystis sp. (strain ATCC 27184 / PCC 6803 / Kazusa).